A 74-amino-acid chain; its full sequence is uncharacterized protein (74 aa).

2 helical membrane-spanning segments follow: residues 3-23 (YSALIPLFILLISLVLFCFSF) and 35-55 (ILFFAYCIDFLALILAVMLLT).

Its subcellular location is the cell membrane. This is an uncharacterized protein from Mycoplasma genitalium (strain ATCC 33530 / DSM 19775 / NCTC 10195 / G37) (Mycoplasmoides genitalium).